A 250-amino-acid polypeptide reads, in one-letter code: MFRATCNTRDFKKVINATSNLVDEICFEVDENGIKASAMDPSHVALVSMEMPKDVFEEYEGDVHDIGIDLEALKKIIARGKGDEKLILDLDAEKNKLNVTFKSNVTRKFSIALYDVSSSNLKVPDIEYPNNVSIKAGAFVEALKDAELVNDHITLKVDEDKFIIYSKGDLNQSETVFDNGVDDDDDTLAEFNMGEASRSTFNLAYLKDLTKSTAAEDLLKIYLGSDMPVKIEYEVSGSKLVFLLAPRIES.

This sequence belongs to the PCNA family. As to quaternary structure, homotrimer. The subunits circularize to form a toroid; DNA passes through its center. Replication factor C (RFC) is required to load the toroid on the DNA.

Functionally, sliding clamp subunit that acts as a moving platform for DNA processing. Responsible for tethering the catalytic subunit of DNA polymerase and other proteins to DNA during high-speed replication. In Methanococcus maripaludis (strain C5 / ATCC BAA-1333), this protein is DNA polymerase sliding clamp.